The sequence spans 617 residues: Type IV inositol polyphosphate 5-phosphatase 6 (617 aa).

Disordered regions lie at residues 30–62 (EFQA…KNTK) and 241–330 (DFDP…VLYS). The segment covering 242 to 253 (FDPSFRGSSSSH) has biased composition (low complexity). The span at 254–290 (RPSDYSRRPSDYSRRPSDYSRRPSDYSRRPSDSRPSD) shows a compositional bias: basic and acidic residues. A compositionally biased stretch (low complexity) spans 291–311 (YSRPSDYYSRPSDYSRPSDFS). 2 catalytic regions span residues 458 to 473 (DRVI…IALS) and 538 to 553 (KRRT…WFGE).

This sequence belongs to the inositol polyphosphate 5-phosphatase family. As to expression, broadly expressed in emerging organs. Mostly localized in procambium of growing organs. Restricted to vascular differentiating cells of young organs.

The catalysed reaction is a 1,2-diacyl-sn-glycero-3-phospho-(1D-myo-inositol-4,5-bisphosphate) + H2O = a 1,2-diacyl-sn-glycero-3-phospho-(1D-myo-inositol 4-phosphate) + phosphate. The enzyme catalyses a 1,2-diacyl-sn-glycero-3-phospho-(1D-myo-inositol-3,4,5-trisphosphate) + H2O = a 1,2-diacyl-sn-glycero-3-phospho-(1D-myo-inositol-3,4-bisphosphate) + phosphate. Functionally, has phosphatase activity toward PtdIns(4,5)P2 and PtdIns(3,4,5)P3. Required for the patterning of procambium and during the differentiation of vascular tissues. Acts before the acquisition of preprocambial identity. Seems to be also involved in the abscisic acid (ABA) signaling pathway. Acts redundantly with CVL1 for maintaining vascular continuity. Regulates phosphoinositide-dependent VAN3 localization. The chain is Type IV inositol polyphosphate 5-phosphatase 6 from Arabidopsis thaliana (Mouse-ear cress).